A 172-amino-acid chain; its full sequence is Nicotinamide-nucleotide adenylyltransferase (172 aa).

This sequence belongs to the archaeal NMN adenylyltransferase family.

The protein resides in the cytoplasm. The catalysed reaction is beta-nicotinamide D-ribonucleotide + ATP + H(+) = diphosphate + NAD(+). The protein operates within cofactor biosynthesis; NAD(+) biosynthesis; NAD(+) from nicotinamide D-ribonucleotide: step 1/1. In Methanococcus vannielii (strain ATCC 35089 / DSM 1224 / JCM 13029 / OCM 148 / SB), this protein is Nicotinamide-nucleotide adenylyltransferase.